We begin with the raw amino-acid sequence, 250 residues long: Probable transcriptional regulatory protein Plut_1643 (250 aa).

The protein belongs to the TACO1 family.

The protein resides in the cytoplasm. This chain is Probable transcriptional regulatory protein Plut_1643, found in Chlorobium luteolum (strain DSM 273 / BCRC 81028 / 2530) (Pelodictyon luteolum).